Reading from the N-terminus, the 256-residue chain is Imidazole glycerol phosphate synthase subunit HisF (256 aa).

Active-site residues include aspartate 12 and aspartate 131.

Belongs to the HisA/HisF family. Heterodimer of HisH and HisF.

It is found in the cytoplasm. It catalyses the reaction 5-[(5-phospho-1-deoxy-D-ribulos-1-ylimino)methylamino]-1-(5-phospho-beta-D-ribosyl)imidazole-4-carboxamide + L-glutamine = D-erythro-1-(imidazol-4-yl)glycerol 3-phosphate + 5-amino-1-(5-phospho-beta-D-ribosyl)imidazole-4-carboxamide + L-glutamate + H(+). The protein operates within amino-acid biosynthesis; L-histidine biosynthesis; L-histidine from 5-phospho-alpha-D-ribose 1-diphosphate: step 5/9. IGPS catalyzes the conversion of PRFAR and glutamine to IGP, AICAR and glutamate. The HisF subunit catalyzes the cyclization activity that produces IGP and AICAR from PRFAR using the ammonia provided by the HisH subunit. The sequence is that of Imidazole glycerol phosphate synthase subunit HisF from Pseudomonas fluorescens (strain ATCC BAA-477 / NRRL B-23932 / Pf-5).